Here is a 1097-residue protein sequence, read N- to C-terminus: DNA-directed RNA polymerase subunit beta (1097 aa).

Belongs to the RNA polymerase beta chain family. In terms of assembly, in plastids the minimal PEP RNA polymerase catalytic core is composed of four subunits: alpha, beta, beta', and beta''. When a (nuclear-encoded) sigma factor is associated with the core the holoenzyme is formed, which can initiate transcription.

It localises to the plastid. Its subcellular location is the chloroplast. The enzyme catalyses RNA(n) + a ribonucleoside 5'-triphosphate = RNA(n+1) + diphosphate. Functionally, DNA-dependent RNA polymerase catalyzes the transcription of DNA into RNA using the four ribonucleoside triphosphates as substrates. The chain is DNA-directed RNA polymerase subunit beta from Rhodomonas salina (Cryptomonas salina).